The chain runs to 686 residues: tRNA wybutosine-synthesizing protein 4 (686 aa).

Positions 1 to 22 (MGPRSRQRRTGTVQSTNDSSSL) are disordered. A compositionally biased stretch (polar residues) spans 10–22 (TGTVQSTNDSSSL). Residues R59, G89, D114, 161-162 (DL), and E188 contribute to the S-adenosyl-L-methionine site.

It belongs to the methyltransferase superfamily. LCMT family. In terms of assembly, interacts with RNF144B/IBRDC2.

The enzyme catalyses 7-[(3S)-3-amino-3-carboxypropyl]wyosine(37) in tRNA(Phe) + S-adenosyl-L-methionine = 7-[(3S)-(3-amino-3-methoxycarbonyl)propyl]wyosine(37) in tRNA(Phe) + S-adenosyl-L-homocysteine. It catalyses the reaction 7-[(3S)-(3-amino-3-methoxycarbonyl)propyl]wyosine(37) in tRNA(Phe) + S-adenosyl-L-methionine + CO2 = wybutosine(37) in tRNA(Phe) + S-adenosyl-L-homocysteine + 2 H(+). The protein operates within tRNA modification; wybutosine-tRNA(Phe) biosynthesis. Its function is as follows. Probable S-adenosyl-L-methionine-dependent methyltransferase that acts as a component of the wybutosine biosynthesis pathway. Wybutosine is a hyper modified guanosine with a tricyclic base found at the 3'-position adjacent to the anticodon of eukaryotic phenylalanine tRNA. May methylate the carboxyl group of leucine residues to form alpha-leucine ester residues. This is tRNA wybutosine-synthesizing protein 4 (Lcmt2) from Rattus norvegicus (Rat).